Reading from the N-terminus, the 391-residue chain is Succinyl-diaminopimelate desuccinylase (391 aa).

Position 67 (His-67) interacts with Zn(2+). Asp-69 is an active-site residue. Zn(2+) is bound at residue Asp-101. Residue Glu-135 is the Proton acceptor of the active site. Residues Glu-136, Glu-164, and His-353 each coordinate Zn(2+).

This sequence belongs to the peptidase M20A family. DapE subfamily. In terms of assembly, homodimer. Requires Zn(2+) as cofactor. Co(2+) is required as a cofactor.

It catalyses the reaction N-succinyl-(2S,6S)-2,6-diaminopimelate + H2O = (2S,6S)-2,6-diaminopimelate + succinate. The protein operates within amino-acid biosynthesis; L-lysine biosynthesis via DAP pathway; LL-2,6-diaminopimelate from (S)-tetrahydrodipicolinate (succinylase route): step 3/3. Catalyzes the hydrolysis of N-succinyl-L,L-diaminopimelic acid (SDAP), forming succinate and LL-2,6-diaminopimelate (DAP), an intermediate involved in the bacterial biosynthesis of lysine and meso-diaminopimelic acid, an essential component of bacterial cell walls. The chain is Succinyl-diaminopimelate desuccinylase from Rickettsia bellii (strain RML369-C).